Reading from the N-terminus, the 355-residue chain is Myricetin 7/4'-O-methyltransferase 2 (355 aa).

Asp-221 serves as a coordination point for S-adenosyl-L-methionine. His-259 (proton acceptor) is an active-site residue.

This sequence belongs to the class I-like SAM-binding methyltransferase superfamily. Cation-independent O-methyltransferase family. As to quaternary structure, homodimer. Mainly expressed in leaves secreting glandular trichomes types 1 and 4 and, to a lesser extent, in storage trichomes type 6.

It carries out the reaction quercetin + S-adenosyl-L-methionine = rhamnetin + S-adenosyl-L-homocysteine + H(+). It catalyses the reaction kaempferol + S-adenosyl-L-methionine = kaempferide + S-adenosyl-L-homocysteine + H(+). The catalysed reaction is myricetin + S-adenosyl-L-methionine = 7-O-methylmyricetin + S-adenosyl-L-homocysteine + H(+). The enzyme catalyses kaempferide + S-adenosyl-L-methionine = 7,4'-O-dimethylkaempferol + S-adenosyl-L-homocysteine + H(+). It carries out the reaction isorhamnetin + S-adenosyl-L-methionine = 3',4'-O-dimethylquercetin + S-adenosyl-L-homocysteine + 2 H(+). It catalyses the reaction 3',4',5,7-tetrahydroxy-3-methoxyflavone + S-adenosyl-L-methionine = 3',4',5-trihydroxy-3,7-dimethoxyflavone + S-adenosyl-L-homocysteine + H(+). The catalysed reaction is rhamnetin + S-adenosyl-L-methionine = 7,4'-O-dimethylquercetin + S-adenosyl-L-homocysteine + H(+). The enzyme catalyses syringetin + S-adenosyl-L-methionine = 7,3',5'-O-trimethylmyricetin + S-adenosyl-L-homocysteine + H(+). It carries out the reaction 3',4',5'-O-trimethylmyricetin + S-adenosyl-L-methionine = 7,3',4',5'-O-tetramethylmyricetin + S-adenosyl-L-homocysteine. It functions in the pathway flavonoid metabolism. Flavonoid 7/4'-O-methyltransferase involved in the biosynthesis of polymethoxylated flavonoids natural products such as myricetin derivatives, aroma compounds possessing antioxidant properties and exhibiting pharmacological activities such as anti-carcinogen, anti-viral, anti-thrombotic, anti-diabetic, anti-atherosclerotic, and anti-inflammatory effects. Catalyzes S-adenosylmethionine-dependent regioselective 7/4'-O-methylation of flavonoids; active on various hydroxylated flavonoid substrates, including myricetin, quercetin and kaempferol. Mediates the formation of 4'-methyl derivatives from kaempferol, 3'-methyl quercetin (isorhamnetin), 7-methyl quercetin (rhamnetin) and 3'-methyl myricetin, producing 4'-methyl kaempferol (kaempferide), 3',4'-dimethyl quercetin (4'-O-methyl isorhamnetin), 7,4'-dimethyl quercetin (4'-O-methyl rhamnetin, rhamnacene) and 3',4'-dimethyl myricetin, respectively. Triggers the 7-O-methylation of quercetin, myricetin, 4'-methyl kaempferol (kaempferide), 3-methyl quercetin, 3',5'-dimethyl myricetin (syringetin) and 3',4',5'-trimethyl myricetin, thus leading to production of 7-methyl quercetin (rhamnetin), 7-methyl myricetin, 7,4'-dimethyl kaempferol (7-O-methyl kaempferide), 3,7-dimethyl quercetin, 7,3',5'-trimethyl myricetin (7-O-methyl syringetin) and 7,3',4',5'-tetramethyl myricetin, respectively. The chain is Myricetin 7/4'-O-methyltransferase 2 from Solanum habrochaites (Wild tomato).